The following is a 696-amino-acid chain: Polyribonucleotide nucleotidyltransferase (696 aa).

Residues aspartate 483 and aspartate 489 each coordinate Mg(2+). Positions 550–609 (PRITTIWVKVDKIRDVIGSGGKNIRSVTEATGVSIDIDDTGKINIASTNKEACDLAIKMI) constitute a KH domain. Residues 619-687 (GKLYMGTVKK…KQGKIKLSRK (69 aa)) form the S1 motif domain.

Belongs to the polyribonucleotide nucleotidyltransferase family. Mg(2+) is required as a cofactor.

The protein localises to the cytoplasm. The catalysed reaction is RNA(n+1) + phosphate = RNA(n) + a ribonucleoside 5'-diphosphate. Involved in mRNA degradation. Catalyzes the phosphorolysis of single-stranded polyribonucleotides processively in the 3'- to 5'-direction. This Geobacter sp. (strain M21) protein is Polyribonucleotide nucleotidyltransferase.